The sequence spans 359 residues: Protein mab-21-like 2-A (359 aa).

It belongs to the mab-21 family.

Its subcellular location is the nucleus. The protein localises to the cytoplasm. Its function is as follows. Required for normal development of the eye. May promote dorsalization of the developing embryo by antagonizing the ventralizing factor bmp4. Functional antagonism of bmp4 may require interaction with smad1. Required for gastrulation and subsequent neural development. May function as a transcriptional repressor. This is Protein mab-21-like 2-A (mab21l2-a) from Xenopus laevis (African clawed frog).